Consider the following 1018-residue polypeptide: Calcium-transporting ATPase sarcoplasmic/endoplasmic reticulum type (1018 aa).

The Cytoplasmic portion of the chain corresponds to M1 to T48. A helical transmembrane segment spans residues L49–A69. The Lumenal portion of the chain corresponds to I70–V88. A helical membrane pass occupies residues E89–R109. Residues N110–L252 are Cytoplasmic-facing. The helical transmembrane segment at D253–A272 threads the bilayer. Topologically, residues I273–Y294 are lumenal. The helical transmembrane segment at F295–A312 threads the bilayer. Residues V303, A304, I306, and E308 each contribute to the Ca(2+) site. The Cytoplasmic segment spans residues V313–M756. The 4-aspartylphosphate intermediate role is filled by D350. Mg(2+)-binding residues include D702 and D706. The helical transmembrane segment at K757 to L776 threads the bilayer. 2 residues coordinate Ca(2+): N767 and E770. The Lumenal portion of the chain corresponds to T777–L786. Residues I787 to G807 form a helical membrane-spanning segment. N795, T798, and D799 together coordinate Ca(2+). Topologically, residues F808–L827 are cytoplasmic. The chain crosses the membrane as a helical span at residues I828–G850. Over A851–M896 the chain is Lumenal. A helical membrane pass occupies residues T897–S916. E907 contacts Ca(2+). Over E917–N929 the chain is Cytoplasmic. A helical transmembrane segment spans residues I930–Y948. At V949–G963 the chain is on the lumenal side. A helical membrane pass occupies residues N964–K984. Residues F985–P1018 are Cytoplasmic-facing.

Belongs to the cation transport ATPase (P-type) (TC 3.A.3) family.

Its subcellular location is the endoplasmic reticulum membrane. The protein localises to the sarcoplasmic reticulum membrane. It catalyses the reaction Ca(2+)(in) + ATP + H2O = Ca(2+)(out) + ADP + phosphate + H(+). In terms of biological role, this magnesium-dependent enzyme catalyzes the hydrolysis of ATP coupled with the transport of calcium. The chain is Calcium-transporting ATPase sarcoplasmic/endoplasmic reticulum type from Anopheles gambiae (African malaria mosquito).